A 308-amino-acid polypeptide reads, in one-letter code: ADP-L-glycero-D-manno-heptose-6-epimerase (308 aa).

NADP(+)-binding positions include 10 to 11 (FI), 31 to 32 (DN), K38, K53, 75 to 79 (EGACS), and N92. Y139 serves as the catalytic Proton acceptor. NADP(+) is bound at residue K143. N168 contacts substrate. NADP(+) is bound by residues V169 and K177. Catalysis depends on K177, which acts as the Proton acceptor. Residues S179, H186, 200 to 203 (FAGS), R208, and Y271 each bind substrate.

Belongs to the NAD(P)-dependent epimerase/dehydratase family. HldD subfamily. As to quaternary structure, homopentamer. The cofactor is NADP(+).

It catalyses the reaction ADP-D-glycero-beta-D-manno-heptose = ADP-L-glycero-beta-D-manno-heptose. It participates in nucleotide-sugar biosynthesis; ADP-L-glycero-beta-D-manno-heptose biosynthesis; ADP-L-glycero-beta-D-manno-heptose from D-glycero-beta-D-manno-heptose 7-phosphate: step 4/4. Functionally, catalyzes the interconversion between ADP-D-glycero-beta-D-manno-heptose and ADP-L-glycero-beta-D-manno-heptose via an epimerization at carbon 6 of the heptose. This Actinobacillus succinogenes (strain ATCC 55618 / DSM 22257 / CCUG 43843 / 130Z) protein is ADP-L-glycero-D-manno-heptose-6-epimerase.